Consider the following 616-residue polypeptide: MPKYRSHTTTHGRNMAGARALWRATGMTDDDFGKPIIAVVNSFTQFVPGHVHLRDLGKLVAEQIVASGGVAKEFNTIAVDDGIAMGHGGMLYSLPSRELIADSVEYMVNAHCADAMVCISNCDKITPGMLMASLRLNIPVIFVSGGPMEAGKTKLSDKIIKLDLIDAMIQGANPNVSDEESAQIERSACPTCGSCSGMFTANSMNCLNEALGLALPGNGSLLATHADRKQLFLDAGKYIVALTKRYYEQDDVSALPRNIANKAAFENAMILDIAMGGSTNTVLHLLAAAQEGEIDFSMTDIDRLSRKVPHLCKVAPSTQKYHMEDVHRAGGVIGILGELDRAGLLNRDVSNVLGLNLTQTLEAYDVMLTQDEGVKQMYAAGPAGIRTTKAFSQDCRYPSLDTDREEGCIRTREHAYSQDGGLAVLYGNIAADGCIVKTAGVDKDSLTFRGPAKVFESQDEAVEAILGGKVVAGDVVVIRYEGPKGGPGMQEMLYPTTYLKSMGLGKSCALLTDGRFSGGTSGLSIGHVSPEAASGGLIGLVQDGDFINIDIPNRGIVLDVSEAELAARRETEEAHGDAAWSPKGRERQVSYALRAYAMLATSADKGAVRDKSKLGG.

Aspartate 81 lines the Mg(2+) pocket. Residue cysteine 122 participates in [2Fe-2S] cluster binding. The Mg(2+) site is built by aspartate 123 and lysine 124. Lysine 124 is subject to N6-carboxylysine. Residue cysteine 195 participates in [2Fe-2S] cluster binding. Glutamate 491 provides a ligand contact to Mg(2+). Serine 517 functions as the Proton acceptor in the catalytic mechanism.

The protein belongs to the IlvD/Edd family. In terms of assembly, homodimer. The cofactor is [2Fe-2S] cluster. Mg(2+) is required as a cofactor.

The catalysed reaction is (2R)-2,3-dihydroxy-3-methylbutanoate = 3-methyl-2-oxobutanoate + H2O. It catalyses the reaction (2R,3R)-2,3-dihydroxy-3-methylpentanoate = (S)-3-methyl-2-oxopentanoate + H2O. It participates in amino-acid biosynthesis; L-isoleucine biosynthesis; L-isoleucine from 2-oxobutanoate: step 3/4. Its pathway is amino-acid biosynthesis; L-valine biosynthesis; L-valine from pyruvate: step 3/4. Its function is as follows. Functions in the biosynthesis of branched-chain amino acids. Catalyzes the dehydration of (2R,3R)-2,3-dihydroxy-3-methylpentanoate (2,3-dihydroxy-3-methylvalerate) into 2-oxo-3-methylpentanoate (2-oxo-3-methylvalerate) and of (2R)-2,3-dihydroxy-3-methylbutanoate (2,3-dihydroxyisovalerate) into 2-oxo-3-methylbutanoate (2-oxoisovalerate), the penultimate precursor to L-isoleucine and L-valine, respectively. The protein is Dihydroxy-acid dehydratase of Yersinia pseudotuberculosis serotype I (strain IP32953).